The primary structure comprises 623 residues: Protein FAM234B (623 aa).

The tract at residues 1–82 (MATVLSRALK…TSERAPEGYP (82 aa)) is disordered. The chain crosses the membrane as a helical span at residues 104 to 124 (AVFLLTVVISMILVLVCAFLI).

Belongs to the FAM234 family.

It localises to the membrane. The protein localises to the golgi outpost. Its subcellular location is the cytoplasm. It is found in the cytoskeleton. The protein resides in the microtubule organizing center. The sequence is that of Protein FAM234B (FAM234B) from Gallus gallus (Chicken).